Here is a 447-residue protein sequence, read N- to C-terminus: Signal recognition particle 54 kDa protein (447 aa).

Residues 103–110 (GVQGSGKT), 185–189 (DTAGR), and 245–248 (TKMD) contribute to the GTP site.

This sequence belongs to the GTP-binding SRP family. SRP54 subfamily. Part of the signal recognition particle protein translocation system, which is composed of SRP and FtsY. Archaeal SRP consists of a 7S RNA molecule of 300 nucleotides and two protein subunits: SRP54 and SRP19.

It localises to the cytoplasm. It catalyses the reaction GTP + H2O = GDP + phosphate + H(+). In terms of biological role, involved in targeting and insertion of nascent membrane proteins into the cytoplasmic membrane. Binds to the hydrophobic signal sequence of the ribosome-nascent chain (RNC) as it emerges from the ribosomes. The SRP-RNC complex is then targeted to the cytoplasmic membrane where it interacts with the SRP receptor FtsY. This Saccharolobus islandicus (strain Y.N.15.51 / Yellowstone #2) (Sulfolobus islandicus) protein is Signal recognition particle 54 kDa protein.